Here is a 332-residue protein sequence, read N- to C-terminus: Ribosomal RNA small subunit methyltransferase C (332 aa).

It belongs to the methyltransferase superfamily. RsmC family. Monomer.

The protein resides in the cytoplasm. The enzyme catalyses guanosine(1207) in 16S rRNA + S-adenosyl-L-methionine = N(2)-methylguanosine(1207) in 16S rRNA + S-adenosyl-L-homocysteine + H(+). In terms of biological role, specifically methylates the guanine in position 1207 of 16S rRNA in the 30S particle. This chain is Ribosomal RNA small subunit methyltransferase C, found in Pseudomonas entomophila (strain L48).